The primary structure comprises 66 residues: KEGYLVNKETGCKLACVTTGENKNCKLDCKNQGGSKGYCLLFRCFCEGLSESTPTFPIPGKTCSGK.

The region spanning 1 to 64 is the LCN-type CS-alpha/beta domain; the sequence is KEGYLVNKET…TFPIPGKTCS (64 aa). Cystine bridges form between cysteine 12-cysteine 63, cysteine 16-cysteine 39, cysteine 25-cysteine 44, and cysteine 29-cysteine 46.

It belongs to the long (4 C-C) scorpion toxin superfamily. Sodium channel inhibitor family. Expressed by the venom gland.

Its subcellular location is the secreted. Functionally, probable sodium channel inhibitor. This is Toxin NaTx-4 from Centruroides sculpturatus (Arizona bark scorpion).